The following is a 259-amino-acid chain: Phosphonates import ATP-binding protein PhnC (259 aa).

One can recognise an ABC transporter domain in the interval 4 to 245 (ISIQSVTKRF…ALRTIYQREG (242 aa)). ATP is bound at residue 37 to 44 (GPSGAGKS).

Belongs to the ABC transporter superfamily. Phosphonates importer (TC 3.A.1.9.1) family. In terms of assembly, the complex is composed of two ATP-binding proteins (PhnC), two transmembrane proteins (PhnE) and a solute-binding protein (PhnD).

The protein localises to the cell inner membrane. It carries out the reaction phosphonate(out) + ATP + H2O = phosphonate(in) + ADP + phosphate + H(+). Functionally, part of the ABC transporter complex PhnCDE involved in phosphonates import. Responsible for energy coupling to the transport system. The sequence is that of Phosphonates import ATP-binding protein PhnC from Thiobacillus denitrificans (strain ATCC 25259 / T1).